A 243-amino-acid polypeptide reads, in one-letter code: tRNA pseudouridine synthase A (243 aa).

Asp-53 acts as the Nucleophile in catalysis. Tyr-111 serves as a coordination point for substrate.

It belongs to the tRNA pseudouridine synthase TruA family. As to quaternary structure, homodimer.

The enzyme catalyses uridine(38/39/40) in tRNA = pseudouridine(38/39/40) in tRNA. Functionally, formation of pseudouridine at positions 38, 39 and 40 in the anticodon stem and loop of transfer RNAs. This is tRNA pseudouridine synthase A from Pelodictyon phaeoclathratiforme (strain DSM 5477 / BU-1).